Reading from the N-terminus, the 983-residue chain is Alanine--tRNA ligase, mitochondrial (983 aa).

The transit peptide at 1-24 (MTSTTGLRNLTLSFKKQLTTSTRT) directs the protein to the mitochondrion. Residue Ser504 is modified to Phosphoserine. His625, His629, Cys744, and His748 together coordinate Zn(2+). Phosphoserine is present on Ser975.

The protein belongs to the class-II aminoacyl-tRNA synthetase family. In terms of assembly, monomer. It depends on Zn(2+) as a cofactor.

It is found in the cytoplasm. The protein resides in the mitochondrion. The catalysed reaction is tRNA(Ala) + L-alanine + ATP = L-alanyl-tRNA(Ala) + AMP + diphosphate. In terms of biological role, catalyzes the attachment of alanine to tRNA(Ala) in a two-step reaction: alanine is first activated by ATP to form Ala-AMP and then transferred to the acceptor end of tRNA(Ala). Also edits incorrectly charged tRNA(Ala) via its editing domain. This is Alanine--tRNA ligase, mitochondrial from Saccharomyces cerevisiae (strain ATCC 204508 / S288c) (Baker's yeast).